A 242-amino-acid chain; its full sequence is Sensory transduction protein LytT (242 aa).

The region spanning 2–116 is the Response regulatory domain; the sequence is HVLIVDDEPL…KITQVIEKAS (115 aa). The region spanning 137 to 241 is the HTH LytTR-type domain; sequence IPIQGEDRIY…VKEFKEKLGL (105 aa).

Post-translationally, phosphorylated by LytS.

It localises to the cytoplasm. Its function is as follows. Member of the two-component regulatory system LytS/LytT that probably regulates genes involved in cell wall metabolism. This chain is Sensory transduction protein LytT (lytT), found in Enterococcus faecalis (strain ATCC 700802 / V583).